A 459-amino-acid polypeptide reads, in one-letter code: Ribulose bisphosphate carboxylase large chain (459 aa).

Lys-4 is subject to N6,N6,N6-trimethyllysine. Residues Asn-113 and Thr-163 each contribute to the substrate site. The Proton acceptor role is filled by Lys-165. Residue Lys-167 participates in substrate binding. Residues Lys-191, Asp-193, and Glu-194 each contribute to the Mg(2+) site. An N6-carboxylysine modification is found at Lys-191. His-284 functions as the Proton acceptor in the catalytic mechanism. The substrate site is built by Arg-285, His-317, and Ser-369.

This sequence belongs to the RuBisCO large chain family. Type I subfamily. In terms of assembly, heterohexadecamer of 8 large chains and 8 small chains; disulfide-linked. The disulfide link is formed within the large subunit homodimers. Requires Mg(2+) as cofactor. The disulfide bond which can form in the large chain dimeric partners within the hexadecamer appears to be associated with oxidative stress and protein turnover.

It is found in the plastid. It localises to the chloroplast. It carries out the reaction 2 (2R)-3-phosphoglycerate + 2 H(+) = D-ribulose 1,5-bisphosphate + CO2 + H2O. The catalysed reaction is D-ribulose 1,5-bisphosphate + O2 = 2-phosphoglycolate + (2R)-3-phosphoglycerate + 2 H(+). In terms of biological role, ruBisCO catalyzes two reactions: the carboxylation of D-ribulose 1,5-bisphosphate, the primary event in carbon dioxide fixation, as well as the oxidative fragmentation of the pentose substrate in the photorespiration process. Both reactions occur simultaneously and in competition at the same active site. The sequence is that of Ribulose bisphosphate carboxylase large chain from Ceratopetalum gummiferum (New South Wales Christmas bush).